Reading from the N-terminus, the 292-residue chain is tRNA (guanine-N(1)-)-methyltransferase (292 aa).

Residues Gly151 and 175–180 (IGDYVL) each bind S-adenosyl-L-methionine.

This sequence belongs to the RNA methyltransferase TrmD family. As to quaternary structure, homodimer.

The protein resides in the cytoplasm. It carries out the reaction guanosine(37) in tRNA + S-adenosyl-L-methionine = N(1)-methylguanosine(37) in tRNA + S-adenosyl-L-homocysteine + H(+). Functionally, specifically methylates guanosine-37 in various tRNAs. This chain is tRNA (guanine-N(1)-)-methyltransferase, found in Corynebacterium diphtheriae (strain ATCC 700971 / NCTC 13129 / Biotype gravis).